A 474-amino-acid polypeptide reads, in one-letter code: Sensor protein CreC (474 aa).

Residues 1 to 6 (MRIGMR) lie on the Periplasmic side of the membrane. Residues 7-27 (LLLGYFLLVAVAAWFVLAIFV) form a helical membrane-spanning segment. Residues 28-146 (KEVKPGVRRA…LQNPADPESS (119 aa)) lie on the Cytoplasmic side of the membrane. A helical membrane pass occupies residues 147–167 (VMYVAAPIMDGSRLIGVLSVG). The Periplasmic portion of the chain corresponds to 168–183 (KPNAAMAPVIKRSERR). A helical membrane pass occupies residues 184–204 (ILWASAILLGIALVIGAGMVW). The 51-residue stretch at 205–255 (WINRSIARLTRYADSVTDNKPVPLPDLGSSELRKLAQALESMRVKLEGKNY) folds into the HAMP domain. Residues 205 to 474 (WINRSIARLT…ASLRLHRHFT (270 aa)) lie on the Cytoplasmic side of the membrane. The Histidine kinase domain occupies 262 to 473 (ALTHELKSPL…LASLRLHRHF (212 aa)). Residue histidine 265 is modified to Phosphohistidine; by autocatalysis.

In terms of processing, autophosphorylated.

The protein localises to the cell inner membrane. It catalyses the reaction ATP + protein L-histidine = ADP + protein N-phospho-L-histidine.. In terms of biological role, member of the two-component regulatory system CreC/CreB involved in catabolic regulation. CreC may function as a membrane-associated protein kinase that phosphorylates CreB in response to environmental signals. CreC can also phosphorylate PhoB. This is Sensor protein CreC (creC) from Escherichia coli (strain K12).